A 243-amino-acid polypeptide reads, in one-letter code: Thaumatin-like protein 1 (243 aa).

Residues 1 to 22 (MMKTLALYGLTLALFFLSGAHS) form the signal peptide. Disulfide bonds link Cys31/Cys242, Cys79/Cys88, Cys93/Cys100, Cys148/Cys231, Cys153/Cys214, Cys161/Cys177, Cys181/Cys190, and Cys191/Cys201.

This sequence belongs to the thaumatin family.

Its subcellular location is the secreted. It is found in the extracellular space. It localises to the apoplast. Its function is as follows. Possesses antifungal activity. The protein is Thaumatin-like protein 1 (TL1) of Castanea sativa (Sweet chestnut).